Consider the following 967-residue polypeptide: MQPEVPLGSGKLKPCSDMGDIQRAAKFRSSQSAHMLLLLLASITMLLCVRGAHGRPTEEDEELVLPSLERARGHDSTTLLRLDAFGQQLHLKLQPDSGFLAPGFTLQTVGRSPGSEAQHLDPTGDLAHCFYSGTVNGDPSSAAALSLCEGVRGAFYLQGEEFFIQPAPAVATERLVPAEPKEESIAPPRFHILRRRRRGSGGAKCGVMDEETLPTSNSGRESQNTPDQWPLRNPTPQGAGKPTGPGSIRKKRFVSSPRYVETMLVADQSMADFHGSGLKHYLLTLFSVAARFYKHPSIRNSISLVVVKILVIYEEQKGPEVTSNAALTLRNFCSWQKQHNSPSDRDPEHYDTAILFTRQDLCGSHTCDTLGMADVGTVCDPSRSCSVIEDDGLQAAFTTAHELGHVFNMPHDDAKHCASFNGVSGDSHLMASMLSSLDHSQPWSPCSAYMVTSFLDNGHGECLMDKPQNPIKLPSDLPGTLYDANRQCQFTFGEESTHCPDAASTCSTLWCTGTSGGLLVCQTKHFPWADGTSCGEGKWCVSGKCVNKTDMKHFATPVHGSWGPWGPWGDCSRTCGGGVQYTMRECDNPVPKNGGKYCEGKRVRYRSCNIEDCPDNNGKTFREEQCEAHNEFSKASFGNEPTVEWTPKYAGVSPKDRCKLTCEAKGIGYFFVLQPKVVDGTPCSPDSTSVCVQGQCVKAGCDRIIDSKKKFDKCGVCGGNGSTCKKISGTVTSTRPGYHDIVTIPAGATNIEVKHRNPRGSRNNGSFLAIRAADGTYILNGNFTLSTLEQDLTYKGTVLRYSGSSAALERIRSFSPLKEPLTIQVLMVGHALRPKIKYTYFMKKKTEPFNAIPTFSEWVIEEWGECSKTCGSGWQRRVVECRDINGHPASECAKEVKPASTRPCADLPCPRWQVGDWSPCSKTCGKGYKKRTLKCLSHDGGVLSNESCDPLKKPKHYIDFCILTQCS.

A signal peptide spans 1-54 (MQPEVPLGSGKLKPCSDMGDIQRAAKFRSSQSAHMLLLLLASITMLLCVRGAHG). A propeptide spanning residues 55–252 (RPTEEDEELV…TGPGSIRKKR (198 aa)) is cleaved from the precursor. The segment at 198-252 (RGSGGAKCGVMDEETLPTSNSGRESQNTPDQWPLRNPTPQGAGKPTGPGSIRKKR) is disordered. Residues 203-210 (AKCGVMDE) carry the Cysteine switch motif. A Zn(2+)-binding site is contributed by C205. Over residues 213-227 (LPTSNSGRESQNTPD) the composition is skewed to polar residues. The Peptidase M12B domain maps to 258-467 (RYVETMLVAD…GHGECLMDKP (210 aa)). 3 residues coordinate Ca(2+): E261, D344, and D351. Cystine bridges form between C333-C385, C362-C367, C379-C462, and C417-C446. H401 is a binding site for Zn(2+). E402 is an active-site residue. The Zn(2+) site is built by H405 and H411. 2 residues coordinate Ca(2+): C462 and D465. One can recognise a Disintegrin domain in the interval 476-558 (DLPGTLYDAN…TDMKHFATPV (83 aa)). Intrachain disulfides connect C488–C511, C499–C521, C506–C540, and C534–C545. The N-linked (GlcNAc...) asparagine glycan is linked to N547. In terms of domain architecture, TSP type-1 1 spans 559–614 (HGSWGPWGPWGDCSRTCGGGVQYTMRECDNPVPKNGGKYCEGKRVRYRSCNIEDCP). Cystine bridges form between C571–C608, C575–C613, and C586–C598. Residues N720, N764, and N782 are each glycosylated (N-linked (GlcNAc...) asparagine). Positions 725 to 857 (KKISGTVTST…PFNAIPTFSE (133 aa)) are spacer. TSP type-1 domains lie at 854–910 (TFSE…LPCP) and 911–967 (RWQV…TQCS). The N-linked (GlcNAc...) asparagine glycan is linked to N945.

Zn(2+) serves as cofactor. The precursor is cleaved by a furin endopeptidase. Post-translationally, glycosylated. Can be O-fucosylated by POFUT2 on a serine or a threonine residue found within the consensus sequence C1-X(2)-(S/T)-C2-G of the TSP type-1 repeat domains where C1 and C2 are the first and second cysteine residue of the repeat, respectively. Fucosylated repeats can then be further glycosylated by the addition of a beta-1,3-glucose residue by the glucosyltransferase, B3GALTL. Fucosylation mediates the efficient secretion of ADAMTS family members. Can also be C-glycosylated with one or two mannose molecules on tryptophan residues within the consensus sequence W-X-X-W of the TPRs, and N-glycosylated. These other glycosylations can also facilitate secretion.

It localises to the secreted. It is found in the extracellular space. The protein resides in the extracellular matrix. Functionally, metalloprotease which cleaves aggrecan, a cartilage proteoglycan, at the '1683-Glu-|-Leu-1684' site (within the chondroitin sulfate attachment domain), and may be involved in its turnover. Also cleaves COMP. Has angiogenic inhibitor activity. May play a critical role in follicular rupture. This is A disintegrin and metalloproteinase with thrombospondin motifs 1 (Adamts1) from Rattus norvegicus (Rat).